Here is a 670-residue protein sequence, read N- to C-terminus: Protein ACCELERATED CELL DEATH 6 (670 aa).

Residues 1-456 are Cytoplasmic-facing; it reads MDSSGADLDR…PNYIFHERWT (456 aa). Residues 18 to 47 form a disordered region; sequence LVSHDQRKDFSHSGGVGTTSPTGDTEPVPK. ANK repeat units follow at residues 66-95, 100-129, 134-163, 182-211, 216-248, 260-290, 295-325, 329-358, 363-391, and 399-428; these read EMTP…PMER, TGDS…CLLF, SRQT…SALA, DGNT…DAPF, KGIS…NVDR, QGNK…SLMD, DGRT…GVYV, DGSF…ASKY, LGQN…DTKH, and DGNT…EILK. Residues 457–477 form a helical membrane-spanning segment; the sequence is LALLLYAIHSSGFESVKSLTI. The Extracellular segment spans residues 478–492; sequence QSVPLDPKKNRHYVN. A helical membrane pass occupies residues 493 to 513; sequence ALLVVAALVATVTFAAGFTIP. The Cytoplasmic portion of the chain corresponds to 514–537; the sequence is GGYISDSKKPNLGRATLATNPTLF. A helical transmembrane segment spans residues 538–558; it reads IFLLFDILAMQSSVATICTLI. At 559–577 the chain is on the extracellular side; it reads WAQLGDLALILKSLHVALP. The helical transmembrane segment at 578 to 598 threads the bilayer; it reads LLLFSLLCMPVAFLFGVITAI. The Cytoplasmic portion of the chain corresponds to 599-602; that stretch reads AHVK. A helical membrane pass occupies residues 603–623; it reads WLLVTISIISGGFFLFAIFIL. The Extracellular portion of the chain corresponds to 624-638; sequence GPHVMLQRSHLPPSS. The chain crosses the membrane as a helical span at residues 639-659; that stretch reads GIFLKTFMLTIDISELFVILI. At 660-670 the chain is on the cytoplasmic side; sequence KACFGCVACSE.

Component of large complexes containing, at least, FLS2, HSP70 and ACD6 in endoplasmic reticulum, plasma membrane and soluble fraction. Associated with HSP70 proteins during endoplasmic reticulum-associated degradation (ERAD). Reduced complex levels upon benzothiazole (BTH) treatment. In terms of processing, ubiquitinated. As to expression, basal expression requires light and salicylic acid (SA).

The protein resides in the cell membrane. The protein localises to the endoplasmic reticulum membrane. Dose-dependent activator of the defense response against virulent pathogens, including bacteria, fungi and oomycetes, that acts in a positive feedback loop with the defense signal salicylic acid (SA). Regulates the salicylic acid (SA) signaling pathway leading to cell death and modulating cell fate (e.g. cell enlargement and/or cell division). In response to SA signaling, triggers the accumulation of FLS2 at the plasma membrane, thus priming defenses. Involved in SA-dependent freezing signaling and tolerance. The chain is Protein ACCELERATED CELL DEATH 6 from Arabidopsis thaliana (Mouse-ear cress).